The chain runs to 186 residues: Peptidyl-tRNA hydrolase (186 aa).

Residue Tyr14 coordinates tRNA. Residue His19 is the Proton acceptor of the active site. TRNA contacts are provided by Phe65, Asn67, and Asn113.

Belongs to the PTH family. As to quaternary structure, monomer.

The protein localises to the cytoplasm. It carries out the reaction an N-acyl-L-alpha-aminoacyl-tRNA + H2O = an N-acyl-L-amino acid + a tRNA + H(+). In terms of biological role, hydrolyzes ribosome-free peptidyl-tRNAs (with 1 or more amino acids incorporated), which drop off the ribosome during protein synthesis, or as a result of ribosome stalling. Catalyzes the release of premature peptidyl moieties from peptidyl-tRNA molecules trapped in stalled 50S ribosomal subunits, and thus maintains levels of free tRNAs and 50S ribosomes. In Limosilactobacillus reuteri (strain DSM 20016) (Lactobacillus reuteri), this protein is Peptidyl-tRNA hydrolase.